A 661-amino-acid chain; its full sequence is Kininogen-1 (661 aa).

Positions 1–20 are cleaved as a signal peptide; the sequence is MKLITTLLLCSGLLLTLTQG. One can recognise a Cystatin kininogen-type 1 domain in the interval 28-131; the sequence is CNDEAVFQAV…TQTCKIAPSK (104 aa). Disulfide bonds link Cys28/Cys631, Cys83/Cys94, Cys107/Cys125, Cys141/Cys144, Cys205/Cys217, Cys228/Cys247, Cys263/Cys266, Cys327/Cys339, and Cys350/Cys369. N-linked (GlcNAc...) asparagine glycosylation occurs at Asn82. The 104-residue stretch at 150-253 folds into the Cystatin kininogen-type 2 domain; that stretch reads TDSPDLEPVL…SQSCTLYSGD (104 aa). 2 N-linked (GlcNAc...) asparagine glycosylation sites follow: Asn168 and Asn204. A glycan (N-linked (GlcNAc...) asparagine) is linked at Asn242. Positions 272 to 375 constitute a Cystatin kininogen-type 3 domain; that stretch reads VDSPELKEVL…TVKCQALDMT (104 aa). Ser331 carries the post-translational modification Phosphoserine. Disordered stretches follow at residues 405 to 471, 485 to 583, and 626 to 661; these read YIAR…LGHG, DGDD…FQDS, and ATSPKCPGRPWKPASWEDPNTETTEFSDFDLLDALS. 2 stretches are compositionally biased toward basic residues: residues 434 to 471 and 492 to 526; these read KANKNHRGHKHGHDHGHWSPRRHGLGHGHQKPHGLGHG and TVGHGHGHGHGHGHGHGHGHGHGHGHGHGHGHGKH. Over residues 541–555 the composition is skewed to low complexity; it reads TESLASSSEYSTTST. Acidic residues predominate over residues 650–661; that stretch reads EFSDFDLLDALS.

Isoform LMW interacts with CRISP3. Post-translationally, bradykinin is released from kininogen by plasma kallikrein. Phosphorylated by FAM20C in the extracellular medium. In terms of processing, bradykinin is inactivated by ACE, which removes the dipeptide Arg-Phe from its C-terminus. As to expression, plasma.

Its subcellular location is the secreted. It localises to the extracellular space. Kininogens are inhibitors of thiol proteases. HMW-kininogen plays an important role in blood coagulation by helping to position optimally prekallikrein and factor XI next to factor XII; HMW-kininogen inhibits the thrombin- and plasmin-induced aggregation of thrombocytes. LMW-kininogen inhibits the aggregation of thrombocytes. LMW-kininogen is in contrast to HMW-kininogen not involved in blood clotting. Functionally, the active peptide bradykinin is a potent vasodilatator that is released from HMW-kininogen shows a variety of physiological effects: (A) influence in smooth muscle contraction, (B) induction of hypotension, (C) natriuresis and diuresis, (D) decrease in blood glucose level, (E) it is a mediator of inflammation and causes (E1) increase in vascular permeability, (E2) stimulation of nociceptors (4E3) release of other mediators of inflammation (e.g. prostaglandins), (F) it has a cardioprotective effect (directly via bradykinin action, indirectly via endothelium-derived relaxing factor action). The polypeptide is Kininogen-1 (Kng1) (Mus musculus (Mouse)).